We begin with the raw amino-acid sequence, 79 residues long: D-alanyl carrier protein (79 aa).

In terms of domain architecture, Carrier spans 2-79 (AEFKEQVLDI…MVIKKLEEIR (78 aa)). An O-(pantetheine 4'-phosphoryl)serine modification is found at S37.

It belongs to the DltC family. In terms of processing, 4'-phosphopantetheine is transferred from CoA to a specific serine of apo-DCP.

It is found in the cytoplasm. It functions in the pathway cell wall biogenesis; lipoteichoic acid biosynthesis. Carrier protein involved in the D-alanylation of lipoteichoic acid (LTA). The loading of thioester-linked D-alanine onto DltC is catalyzed by D-alanine--D-alanyl carrier protein ligase DltA. The DltC-carried D-alanyl group is further transferred to cell membrane phosphatidylglycerol (PG) by forming an ester bond, probably catalyzed by DltD. D-alanylation of LTA plays an important role in modulating the properties of the cell wall in Gram-positive bacteria, influencing the net charge of the cell wall. The polypeptide is D-alanyl carrier protein (Bacillus mycoides (strain KBAB4) (Bacillus weihenstephanensis)).